The sequence spans 301 residues: tRNA dimethylallyltransferase (301 aa).

9–16 (GPTASGKS) lines the ATP pocket. Position 11–16 (11–16 (TASGKS)) interacts with substrate. The tract at residues 34-37 (DSMQ) is interaction with substrate tRNA.

Belongs to the IPP transferase family. Monomer. The cofactor is Mg(2+).

The catalysed reaction is adenosine(37) in tRNA + dimethylallyl diphosphate = N(6)-dimethylallyladenosine(37) in tRNA + diphosphate. Functionally, catalyzes the transfer of a dimethylallyl group onto the adenine at position 37 in tRNAs that read codons beginning with uridine, leading to the formation of N6-(dimethylallyl)adenosine (i(6)A). In Corynebacterium efficiens (strain DSM 44549 / YS-314 / AJ 12310 / JCM 11189 / NBRC 100395), this protein is tRNA dimethylallyltransferase.